A 247-amino-acid polypeptide reads, in one-letter code: Probable transcriptional regulatory protein Swit_2142 (247 aa).

The segment covering 1 to 14 (MAGHSKFKNIMHRK) has biased composition (basic residues). Positions 1 to 21 (MAGHSKFKNIMHRKGAQDKKR) are disordered.

The protein belongs to the TACO1 family.

It is found in the cytoplasm. This Rhizorhabdus wittichii (strain DSM 6014 / CCUG 31198 / JCM 15750 / NBRC 105917 / EY 4224 / RW1) (Sphingomonas wittichii) protein is Probable transcriptional regulatory protein Swit_2142.